A 365-amino-acid chain; its full sequence is NAD(P)H-quinone oxidoreductase subunit 1, chloroplastic (365 aa).

8 helical membrane passes run 27–47, 98–118, 129–149, 165–185, 203–223, 253–273, 302–322, and 345–365; these read VWIF…VLVI, FSIG…VIPF, IGIF…LMSG, AAQS…ISLL, FWGW…ISSL, FGLF…FVTI, IFGT…FLFI, and FLLP…LFSL.

It belongs to the complex I subunit 1 family. In terms of assembly, NDH is composed of at least 16 different subunits, 5 of which are encoded in the nucleus.

It localises to the plastid. It is found in the chloroplast thylakoid membrane. The enzyme catalyses a plastoquinone + NADH + (n+1) H(+)(in) = a plastoquinol + NAD(+) + n H(+)(out). It catalyses the reaction a plastoquinone + NADPH + (n+1) H(+)(in) = a plastoquinol + NADP(+) + n H(+)(out). NDH shuttles electrons from NAD(P)H:plastoquinone, via FMN and iron-sulfur (Fe-S) centers, to quinones in the photosynthetic chain and possibly in a chloroplast respiratory chain. The immediate electron acceptor for the enzyme in this species is believed to be plastoquinone. Couples the redox reaction to proton translocation, and thus conserves the redox energy in a proton gradient. The protein is NAD(P)H-quinone oxidoreductase subunit 1, chloroplastic of Arabis hirsuta (Hairy rock-cress).